A 642-amino-acid polypeptide reads, in one-letter code: Frizzled-1 (642 aa).

An N-terminal signal peptide occupies residues 1-68 (MAEEAAPSES…WLLEAPLLLG (68 aa)). 2 disordered regions span residues 26–45 (PGRREEVGHEDTASHRRPRA) and 76–99 (QVSGPGQQAPPPPQPQQSGQQYNG). At 69–317 (VRAQAAGQVS…PEELRFSRTW (249 aa)) the chain is on the extracellular side. The FZ domain maps to 106-225 (PDHGYCQPIS…HGAGELCVGQ (120 aa)). 5 disulfide bridges follow: C111–C172, C119–C165, C156–C193, C182–C222, and C186–C210. N-linked (GlcNAc...) asparagine glycosylation is present at N125. An N-linked (GlcNAc...) asparagine glycan is attached at N226. A helical membrane pass occupies residues 318-338 (IGIWSVLCCASTLFTVLTYLV). Topologically, residues 339–349 (DMRRFSYPERP) are cytoplasmic. A helical transmembrane segment spans residues 350–370 (IIFLSGCYTAVAVAYIAGFLL). Over 371-397 (EDRVVCNDKFAEDGARTVAQGTKKEGC) the chain is Extracellular. The chain crosses the membrane as a helical span at residues 398–418 (TILFMMLYFFSMASSIWWVIL). The Cytoplasmic segment spans residues 419-440 (SLTWFLAAGMKWGHEAIEANSQ). Residues 441-461 (YFHLAAWAVPAIKTITILALG) form a helical membrane-spanning segment. The Extracellular segment spans residues 462-484 (QVDGDVLSGVCFVGLNNVDALRG). A helical membrane pass occupies residues 485–505 (FVLAPLFVYLFIGTSFLLAGF). The Cytoplasmic portion of the chain corresponds to 506 to 531 (VSLFRIRTIMKHDGTKTEKLEKLMVR). A helical transmembrane segment spans residues 532–552 (IGVFSVLYTVPATIVIACYFY). Residues 553–593 (EQAFRDQWERSWVAQSCKSYAIPCPHLQGGGGVPPHPPMSP) lie on the Extracellular side of the membrane. The helical transmembrane segment at 594–614 (DFTVFMIKYLMTLIVGITSGF) threads the bilayer. Residues 615 to 642 (WIWSGKTLNSWRKFYTRLTNSKQGETTV) lie on the Cytoplasmic side of the membrane. The short motif at 620-625 (KTLNSW) is the Lys-Thr-X-X-X-Trp motif, mediates interaction with the PDZ domain of Dvl family members element. The short motif at 640-642 (TTV) is the PDZ-binding element.

It belongs to the G-protein coupled receptor Fz/Smo family. Interacts with MYOC. Interacts with WNT7B. Post-translationally, ubiquitinated by ZNRF3, leading to its degradation by the proteasome. In terms of tissue distribution, expressed in chondrocytes.

The protein resides in the cell membrane. Functionally, receptor for Wnt proteins. Activated by WNT7B. Activated by WNT3A, WNT3, WNT1 and to a lesser extent WNT2, but apparently not by WNT4, WNT5A, WNT5B, WNT6, WNT7A or WNT7B. Contradictory results showing activation by WNT7B have been described for mouse. Functions in the canonical Wnt/beta-catenin signaling pathway. The canonical Wnt/beta-catenin signaling pathway leads to the activation of disheveled proteins, inhibition of GSK-3 kinase, nuclear accumulation of beta-catenin and activation of Wnt target genes. A second signaling pathway involving PKC and calcium fluxes has been seen for some family members, but it is not yet clear if it represents a distinct pathway or if it can be integrated in the canonical pathway, as PKC seems to be required for Wnt-mediated inactivation of GSK-3 kinase. Both pathways seem to involve interactions with G-proteins. May be involved in transduction and intercellular transmission of polarity information during tissue morphogenesis and/or in differentiated tissues. In Mus musculus (Mouse), this protein is Frizzled-1 (Fzd1).